Reading from the N-terminus, the 121-residue chain is Basic phospholipase A2 caudoxin (121 aa).

Intrachain disulfides connect cysteine 25-cysteine 114, cysteine 27-cysteine 43, cysteine 42-cysteine 94, cysteine 48-cysteine 121, cysteine 49-cysteine 87, cysteine 56-cysteine 80, and cysteine 74-cysteine 85. Ca(2+)-binding residues include tyrosine 26, glycine 28, and glycine 30. Residue histidine 46 is part of the active site. Aspartate 47 serves as a coordination point for Ca(2+). Residue aspartate 88 is part of the active site.

This sequence belongs to the phospholipase A2 family. Group II subfamily. D49 sub-subfamily. As to quaternary structure, monomer. Requires Ca(2+) as cofactor. As to expression, expressed by the venom gland.

Its subcellular location is the secreted. The enzyme catalyses a 1,2-diacyl-sn-glycero-3-phosphocholine + H2O = a 1-acyl-sn-glycero-3-phosphocholine + a fatty acid + H(+). Functionally, snake venom phospholipase A2 (PLA2) that shows anticoagulant activity and presynaptic neurotoxicity. Acts as an anticoagulant toxin by inhibiting prothrombinase complex formation. Shows about 50% of the prothrombinase complex inhibition compared to CM-IV of N.nigricollis venom. Acts as a neurotoxin by inhibiting neuromuscular transmission by blocking acetylcholine release from the nerve termini. PLA2 catalyzes the calcium-dependent hydrolysis of the 2-acyl groups in 3-sn-phosphoglycerides. This is Basic phospholipase A2 caudoxin from Bitis caudalis (Horned adder).